The sequence spans 557 residues: Urocanate hydratase (557 aa).

Residues 53–54 (GG), Gln-131, 177–179 (GMG), Glu-197, 243–244 (NA), 264–268 (QTSAH), 274–275 (YL), and Tyr-323 contribute to the NAD(+) site. Residue Cys-411 is part of the active site. Gly-493 contacts NAD(+).

It belongs to the urocanase family. Requires NAD(+) as cofactor.

It is found in the cytoplasm. The enzyme catalyses 4-imidazolone-5-propanoate = trans-urocanate + H2O. The protein operates within amino-acid degradation; L-histidine degradation into L-glutamate; N-formimidoyl-L-glutamate from L-histidine: step 2/3. Its function is as follows. Catalyzes the conversion of urocanate to 4-imidazolone-5-propionate. In Mesorhizobium japonicum (strain LMG 29417 / CECT 9101 / MAFF 303099) (Mesorhizobium loti (strain MAFF 303099)), this protein is Urocanate hydratase.